The sequence spans 117 residues: Probable non-functional immunoglobulinn kappa variable 1-37 (117 aa).

A signal peptide spans 1–22; sequence MDMRVPAQLLGLLLLWVPGARC. In terms of domain architecture, Ig-like spans 24 to 117; that stretch reads IQLTQSPSSL…YYGQRTYNAP (94 aa).

As to quaternary structure, most probably, the immunoglobulin is not assembled due to incorrect folding of light chain. Immunoglobulins are composed of two identical heavy chains and two identical light chains; disulfide-linked.

The protein localises to the secreted. The protein resides in the cell membrane. In terms of biological role, probable non-functional open reading frame (ORF) of V region of the variable domain of immunoglobulin light chains. Non-functional ORF generally cannot participate in the synthesis of a productive immunoglobulin chain due to altered V-(D)-J or switch recombination and/or splicing site (at mRNA level) and/or conserved amino acid change (protein level). Immunoglobulins, also known as antibodies, are membrane-bound or secreted glycoproteins produced by B lymphocytes. In the recognition phase of humoral immunity, the membrane-bound immunoglobulins serve as receptors which, upon binding of a specific antigen, trigger the clonal expansion and differentiation of B lymphocytes into immunoglobulins-secreting plasma cells. Secreted immunoglobulins mediate the effector phase of humoral immunity, which results in the elimination of bound antigens. The antigen binding site is formed by the variable domain of one heavy chain, together with that of its associated light chain. Thus, each immunoglobulin has two antigen binding sites with remarkable affinity for a particular antigen. The variable domains are assembled by a process called V-(D)-J rearrangement and can then be subjected to somatic hypermutations which, after exposure to antigen and selection, allow affinity maturation for a particular antigen. This is Probable non-functional immunoglobulinn kappa variable 1-37 from Homo sapiens (Human).